Reading from the N-terminus, the 392-residue chain is Formate-dependent phosphoribosylglycinamide formyltransferase (392 aa).

N(1)-(5-phospho-beta-D-ribosyl)glycinamide contacts are provided by residues 22-23 (EL) and glutamate 82. ATP contacts are provided by residues arginine 114, lysine 155, 160–165 (SSGKGQ), 195–198 (EGVV), and glutamate 203. Residues 119–308 (RLAAEELWVP…EFALHVRAFL (190 aa)) form the ATP-grasp domain. Mg(2+)-binding residues include glutamate 267 and glutamate 279. Residues aspartate 286, lysine 355, and 362–363 (RR) contribute to the N(1)-(5-phospho-beta-D-ribosyl)glycinamide site.

Belongs to the PurK/PurT family. As to quaternary structure, homodimer.

The enzyme catalyses N(1)-(5-phospho-beta-D-ribosyl)glycinamide + formate + ATP = N(2)-formyl-N(1)-(5-phospho-beta-D-ribosyl)glycinamide + ADP + phosphate + H(+). It participates in purine metabolism; IMP biosynthesis via de novo pathway; N(2)-formyl-N(1)-(5-phospho-D-ribosyl)glycinamide from N(1)-(5-phospho-D-ribosyl)glycinamide (formate route): step 1/1. Involved in the de novo purine biosynthesis. Catalyzes the transfer of formate to 5-phospho-ribosyl-glycinamide (GAR), producing 5-phospho-ribosyl-N-formylglycinamide (FGAR). Formate is provided by PurU via hydrolysis of 10-formyl-tetrahydrofolate. This is Formate-dependent phosphoribosylglycinamide formyltransferase from Erwinia tasmaniensis (strain DSM 17950 / CFBP 7177 / CIP 109463 / NCPPB 4357 / Et1/99).